Consider the following 326-residue polypeptide: DnaJ homolog subfamily B member 6 (326 aa).

In terms of domain architecture, J spans aspartate 3–glycine 69. Positions alanine 249 to tyrosine 326 are disordered. At serine 277 the chain carries Phosphoserine.

In terms of assembly, homooligomer.

It is found in the cytoplasm. The protein localises to the perinuclear region. Its subcellular location is the nucleus. Functionally, has a stimulatory effect on the ATPase activity of HSP70 in a dose-dependent and time-dependent manner and hence acts as a co-chaperone of HSP70. Plays an indispensable role in the organization of KRT8/KRT18 filaments. Acts as an endogenous molecular chaperone for neuronal proteins including huntingtin. Suppresses aggregation and toxicity of polyglutamine-containing, aggregation-prone proteins. Also reduces cellular toxicity and caspase-3 activity. This is DnaJ homolog subfamily B member 6 from Gallus gallus (Chicken).